The primary structure comprises 376 residues: Ribosomal RNA large subunit methyltransferase G (376 aa).

It belongs to the methyltransferase superfamily. RlmG family.

It localises to the cytoplasm. The catalysed reaction is guanosine(1835) in 23S rRNA + S-adenosyl-L-methionine = N(2)-methylguanosine(1835) in 23S rRNA + S-adenosyl-L-homocysteine + H(+). In terms of biological role, specifically methylates the guanine in position 1835 (m2G1835) of 23S rRNA. The protein is Ribosomal RNA large subunit methyltransferase G of Klebsiella pneumoniae (strain 342).